A 178-amino-acid chain; its full sequence is uncharacterized protein (178 aa).

4 helical membrane-spanning segments follow: residues 3–23 (IPIILTLMLFSLGFIFGFISI), 56–76 (IFLMLAGSITFGLSTFINLIF), 101–121 (LILPHGIFEISAMLISAVAGF), and 150–170 (LSLISIILIVIAAFIEVYITP).

To M.jannaschii MJ0706 and Synechocystis PCC 6803 slr1478.

It is found in the cell membrane. This is an uncharacterized protein from Methanocaldococcus jannaschii (strain ATCC 43067 / DSM 2661 / JAL-1 / JCM 10045 / NBRC 100440) (Methanococcus jannaschii).